Consider the following 200-residue polypeptide: Small ribosomal subunit protein uS4 (200 aa).

The region spanning 92–155 is the S4 RNA-binding domain; the sequence is SRLDAVVYSL…QKLNVIVESV (64 aa).

Belongs to the universal ribosomal protein uS4 family. As to quaternary structure, part of the 30S ribosomal subunit. Contacts protein S5. The interaction surface between S4 and S5 is involved in control of translational fidelity.

Its function is as follows. One of the primary rRNA binding proteins, it binds directly to 16S rRNA where it nucleates assembly of the body of the 30S subunit. Functionally, with S5 and S12 plays an important role in translational accuracy. This chain is Small ribosomal subunit protein uS4, found in Staphylococcus aureus (strain MRSA252).